Here is a 1271-residue protein sequence, read N- to C-terminus: Breakpoint cluster region protein (1271 aa).

An N-acetylmethionine modification is found at Met1. The tract at residues 1–426 (MVDPVGFAEA…DGEGAFHGDA (426 aa)) is kinase. Residues 28–55 (VGDIEQELERCKASIRRLEQEVNQERFR) are a coiled coil. The disordered stretch occupies residues 67–173 (KKSYDRQRWG…GHGQPGADAE (107 aa)). The span at 87–105 (ASEPRASASRPQPAPADGA) shows a compositional bias: low complexity. The residue at position 122 (Ser122) is a Phosphoserine. Over residues 123 to 138 (PGKARPGTARRPGAAA) the composition is skewed to low complexity. Phosphoserine is present on Ser139. Tyr177 bears the Phosphotyrosine; by HCK mark. Over residues 185-198 (ERGLVKVNDKEVSD) the composition is skewed to basic and acidic residues. Disordered stretches follow at residues 185 to 247 (ERGL…GDYE), 286 to 392 (GMME…HKRH), and 416 to 476 (NDGE…SRDA). A binding to ABL SH2-domain region spans residues 197 to 385 (SDRISSLGSQ…QSFDSSSPPT (189 aa)). A compositionally biased stretch (polar residues) spans 199–208 (RISSLGSQAM). Residues Ser202, Ser215, Ser222, and Ser236 each carry the phosphoserine modification. Tyr246 bears the Phosphotyrosine; by FES mark. Low complexity-rich tracts occupy residues 346-356 (SSGQSSRVSPS) and 369-382 (SPSQNSQQSFDSSS). Phosphoserine occurs at positions 356, 377, and 382. Residue Thr385 is modified to Phosphothreonine. Positions 441–451 (DRAEEQRRHQD) are enriched in basic and acidic residues. Phosphoserine is present on residues Ser459 and Ser463. Arg471 is subject to Omega-N-methylarginine. Ser473 and Ser488 each carry phosphoserine. The 194-residue stretch at 498–691 (MRKWVLSGIL…QNFLSSINEE (194 aa)) folds into the DH domain. The residue at position 554 (Tyr554) is a Phosphotyrosine. A Phosphothreonine modification is found at Thr641. A Phosphotyrosine modification is found at Tyr644. At Thr693 the chain carries Phosphothreonine. The PH domain maps to 708–866 (QLLKDSFMVE…WRENIREQQK (159 aa)). The region spanning 893–1020 (HSIPLTINKE…QDRDWQRTVI (128 aa)) is the C2 domain. Position 894 is a phosphoserine (Ser894). One can recognise a Rho-GAP domain in the interval 1054–1248 (VKIAVVTKRE…VMSQVQVLLY (195 aa)). Ser1264 carries the phosphoserine modification.

In terms of assembly, homotetramer. Interacts with PDZK1. May interact with CCPG1. Interacts with FES/FPS, ABL1, PIK3R1 and GRB2. Interacts with HCK. Interacts with SH2D5. Interacts with DLG4. In terms of processing, autophosphorylated. Phosphorylated by FES/FPS on tyrosine residues, leading to down-regulation of the BCR kinase activity. Phosphorylation at Tyr-177 by HCK is important for interaction with GRB2.

It is found in the postsynaptic density. Its subcellular location is the cell projection. The protein localises to the dendritic spine. The protein resides in the axon. It localises to the synapse. It carries out the reaction L-seryl-[protein] + ATP = O-phospho-L-seryl-[protein] + ADP + H(+). The catalysed reaction is L-threonyl-[protein] + ATP = O-phospho-L-threonyl-[protein] + ADP + H(+). Protein with a unique structure having two opposing regulatory activities toward small GTP-binding proteins. The C-terminus is a GTPase-activating protein (GAP) domain which stimulates GTP hydrolysis by RAC1, RAC2 and CDC42. Accelerates the intrinsic rate of GTP hydrolysis of RAC1 or CDC42, leading to down-regulation of the active GTP-bound form. The central Dbl homology (DH) domain functions as guanine nucleotide exchange factor (GEF) that modulates the GTPases CDC42, RHOA and RAC1. Promotes the conversion of CDC42, RHOA and RAC1 from the GDP-bound to the GTP-bound form. The amino terminus contains an intrinsic kinase activity. Functions as an important negative regulator of neuronal RAC1 activity. Regulates macrophage functions such as CSF1-directed motility and phagocytosis through the modulation of RAC1 activity. Plays a major role as a RHOA GEF in keratinocytes being involved in focal adhesion formation and keratinocyte differentiation. This chain is Breakpoint cluster region protein, found in Homo sapiens (Human).